A 115-amino-acid chain; its full sequence is Large ribosomal subunit protein bL20c (115 aa).

This sequence belongs to the bacterial ribosomal protein bL20 family.

Its subcellular location is the plastid. It localises to the chloroplast. Functionally, binds directly to 23S ribosomal RNA and is necessary for the in vitro assembly process of the 50S ribosomal subunit. It is not involved in the protein synthesizing functions of that subunit. This is Large ribosomal subunit protein bL20c from Chlorokybus atmophyticus (Soil alga).